Consider the following 555-residue polypeptide: TBCC domain-containing protein 1 (555 aa).

One can recognise a C-CAP/cofactor C-like domain in the interval 302 to 433 (PEVSPMVIMS…LEDHMAQVGL (132 aa)).

Belongs to the TBCC family.

The protein resides in the cytoplasm. The protein localises to the cytoskeleton. It localises to the microtubule organizing center. It is found in the centrosome. Its subcellular location is the spindle pole. Its function is as follows. May play a role in the regulation of centrosome and Golgi apparatus positioning. This chain is TBCC domain-containing protein 1 (TBCCD1), found in Gallus gallus (Chicken).